The following is a 186-amino-acid chain: MGLLDRLSVLLGLKKKEVHVLCLGLDNSGKTTIINKLKPSNAQSQNILPTIGFSIEKFKSSSLSFTVFDMSGQGRYRNLWEHYYKEGQAIIFVIDSSDRLRMVVAKEELDTLLNHPDIKHRRIPILFFANKMDLRDAVTSVKVSQLLCLENIKDKPWHICASDAIKGEGLQEGVDWLQDQIQTVKT.

G2 is lipidated: N-myristoyl glycine. GTP is bound by residues 24-31 (GLDNSGKT), T50, 69-73 (DMSGQ), G72, 130-133 (NKMD), and A164. Residues T31 and T50 each contribute to the Mg(2+) site.

The protein belongs to the small GTPase superfamily. Arf family. In terms of assembly, interacts with SEC61B, ARL6IP1, ARL6IP2, ARL6IP3, ARL6IP4 ARL6IP5 and ARL6IP6. Interacts (GTP-bound form) with the BBSome a complex that contains BBS1, BBS2, BBS4, BBS5, BBS7, BBS8/TTC8, BBS9 and BBIP10. Interacts (GTP-free form) with IFT27.

Its subcellular location is the cell projection. It is found in the cilium membrane. The protein resides in the cytoplasm. It localises to the cytoskeleton. The protein localises to the cilium axoneme. Its subcellular location is the cilium basal body. Functionally, involved in membrane protein trafficking at the base of the ciliary organelle. Mediates recruitment onto plasma membrane of the BBSome complex which would constitute a coat complex required for sorting of specific membrane proteins to the primary cilia. Together with BBS1, is necessary for correct trafficking of PKD1 to primary cilia. Together with the BBSome complex and LTZL1, controls SMO ciliary trafficking and contributes to the sonic hedgehog (SHH) pathway regulation. May regulate cilia assembly and disassembly and subsequent ciliary signaling events such as the Wnt signaling cascade. Isoform 2 may be required for proper retinal function and organization. The sequence is that of ADP-ribosylation factor-like protein 6 (ARL6) from Homo sapiens (Human).